The primary structure comprises 440 residues: Transposon Ty1-NL2 Gag polyprotein (440 aa).

4 stretches are compositionally biased toward polar residues: residues 1-23 (MESQ…SVTS), 48-60 (TKAN…TPAS), 71-97 (SPQT…NQAN), and 129-152 (QFPQ…GNTF). Disordered stretches follow at residues 1-97 (MESQ…NQAN), 129-171 (QFPQ…YVRP), and 352-440 (GSRN…PETY). Low complexity predominate over residues 153 to 165 (TDSSSADSDMTST). The tract at residues 299–401 (NNGIHINNKV…NSKSKTARAH (103 aa)) is RNA-binding. Positions 402–418 (NVSTSNNSPSTDNDSIS) are enriched in low complexity. A Phosphoserine modification is found at Ser416. The segment covering 419 to 428 (KSTTEPIQLN) has biased composition (polar residues). Residues 429–440 (NKHDLHLRPETY) are compositionally biased toward basic and acidic residues.

In terms of assembly, homotrimer.

It is found in the cytoplasm. Functionally, capsid protein (CA) is the structural component of the virus-like particle (VLP), forming the shell that encapsulates the retrotransposons dimeric RNA genome. The particles are assembled from trimer-clustered units and there are holes in the capsid shells that allow for the diffusion of macromolecules. CA also has nucleocapsid-like chaperone activity, promoting primer tRNA(i)-Met annealing to the multipartite primer-binding site (PBS), dimerization of Ty1 RNA and initiation of reverse transcription. This Saccharomyces cerevisiae (strain ATCC 204508 / S288c) (Baker's yeast) protein is Transposon Ty1-NL2 Gag polyprotein (TY1A-NL2).